The primary structure comprises 347 residues: uncharacterized protein (347 aa).

5 disordered regions span residues 1-40 (MAQE…SNSM), 72-92 (SCED…IQGS), 133-158 (SDST…QLTL), 173-209 (ENQK…QVSH), and 306-347 (EDPR…PPDF). Polar residues predominate over residues 15-25 (PGQNITETTTD). Residues 143–154 (GDNKDKHPKEKT) are compositionally biased toward basic and acidic residues. Positions 179–194 (KDDDSVFPESAQEEDS) are enriched in acidic residues. Over residues 195-209 (QLPSSSLPGMAQVSH) the composition is skewed to polar residues. Residues 306 to 318 (EDPREANERPREL) show a composition bias toward basic and acidic residues. Over residues 319–330 (ARKKRFSYRSKR) the composition is skewed to basic residues.

This is an uncharacterized protein from Bos taurus (Bovine).